The primary structure comprises 482 residues: Alanine aminotransferase 2 (482 aa).

K299 carries the N6-(pyridoxal phosphate)lysine modification.

This sequence belongs to the class-I pyridoxal-phosphate-dependent aminotransferase family. Alanine aminotransferase subfamily. Homodimer. Requires pyridoxal 5'-phosphate as cofactor.

It catalyses the reaction L-alanine + 2-oxoglutarate = pyruvate + L-glutamate. The protein operates within photosynthesis; C4 acid pathway. It participates in amino-acid degradation; L-alanine degradation via transaminase pathway; pyruvate from L-alanine: step 1/1. Transfer of C3 units between the cytosol of mesophyll and bundle sheath cells to maintain a nitrogen-carbon balance in the C4-dicarboxylic pathway. This is Alanine aminotransferase 2 from Hordeum vulgare (Barley).